Reading from the N-terminus, the 786-residue chain is Diamine oxidase [copper-containing] 1, peroxisomal (786 aa).

419 to 430 is a substrate binding site; it reads AFDAGEDGLGKN. The active-site Proton acceptor is the Asp-421. A disulfide bridge links Cys-440 with Cys-466. Residue 502-507 participates in substrate binding; the sequence is VANYEY. The active-site Schiff-base intermediate with substrate; via topaquinone is the Tyr-505. Tyr-505 bears the 2',4',5'-topaquinone mark. Residues His-555 and His-557 each contribute to the Cu cation site. Mn(2+) is bound by residues Asp-710 and Ile-711. His-721 is a binding site for Cu cation.

The protein belongs to the copper/topaquinone oxidase family. Homodimer. Cu cation serves as cofactor. It depends on Zn(2+) as a cofactor. The cofactor is L-topaquinone. Post-translationally, topaquinone (TPQ) is generated by copper-dependent autoxidation of a specific tyrosyl residue. In terms of tissue distribution, mainly expressed in roots, and, to a lower extent, in leaves and stems.

It is found in the peroxisome. It catalyses the reaction a primary methyl amine + O2 + H2O = an aldehyde + H2O2 + NH4(+). It carries out the reaction N-methylputrescine + O2 + H2O = 4-methylaminobutanal + H2O2 + NH4(+). It participates in alkaloid biosynthesis; nicotine biosynthesis. Its pathway is amine and polyamine degradation; putrescine degradation. Involved in putrescine catabolism in peroxisomes. May also be involved in the biosynthesis of pyridine alkaloid natural products, leading mainly to the production of anabasine, anatabine, nicotine and nornicotine, effective deterrents against herbivores with antiparasitic and pesticide properties (neurotoxins); nornicotine serves as the precursor in the synthesis of the carcinogen compound N'-nitrosonornicotine (NNN). Oxidizes preferentially non-N-methylated amines. The polypeptide is Diamine oxidase [copper-containing] 1, peroxisomal (Nicotiana tabacum (Common tobacco)).